The chain runs to 230 residues: tRNA (guanine-N(7)-)-methyltransferase (230 aa).

4 residues coordinate S-adenosyl-L-methionine: glutamate 61, glutamate 86, aspartate 113, and aspartate 135. Aspartate 135 is an active-site residue. Residues lysine 139, aspartate 171, and threonine 209 to glutamate 212 each bind substrate.

It belongs to the class I-like SAM-binding methyltransferase superfamily. TrmB family.

The enzyme catalyses guanosine(46) in tRNA + S-adenosyl-L-methionine = N(7)-methylguanosine(46) in tRNA + S-adenosyl-L-homocysteine. It participates in tRNA modification; N(7)-methylguanine-tRNA biosynthesis. Functionally, catalyzes the formation of N(7)-methylguanine at position 46 (m7G46) in tRNA. The polypeptide is tRNA (guanine-N(7)-)-methyltransferase (Rhizobium etli (strain ATCC 51251 / DSM 11541 / JCM 21823 / NBRC 15573 / CFN 42)).